A 421-amino-acid polypeptide reads, in one-letter code: UV-B-induced protein At3g17800, chloroplastic (421 aa).

Disordered stretches follow at residues 1-40 (MDALTSSLVRSPIVPSRTSDNGSGSMFLTASGPGFTRSGS) and 74-95 (VRASSASNDASSGSSPKPIAPL). A chloroplast-targeting transit peptide spans 1–75 (MDALTSSLVR…AKTRRSFVVR (75 aa)). Residues 16–28 (SRTSDNGSGSMFL) show a composition bias toward polar residues. The segment covering 74 to 88 (VRASSASNDASSGSS) has biased composition (low complexity).

It localises to the plastid. The protein resides in the chloroplast. The protein is UV-B-induced protein At3g17800, chloroplastic of Arabidopsis thaliana (Mouse-ear cress).